Reading from the N-terminus, the 89-residue chain is Small ribosomal subunit protein bS16c (89 aa).

Belongs to the bacterial ribosomal protein bS16 family.

The protein localises to the plastid. Its subcellular location is the chloroplast. The chain is Small ribosomal subunit protein bS16c from Morus indica (Mulberry).